Consider the following 381-residue polypeptide: L-lactate dehydrogenase (381 aa).

The 380-residue stretch at 1-380 folds into the FMN hydroxy acid dehydrogenase domain; that stretch reads MIISASTDYR…TRDSLVRELG (380 aa). Residue tyrosine 24 participates in substrate binding. Residues serine 106 and glutamine 127 each coordinate FMN. Residue tyrosine 129 participates in substrate binding. Threonine 155 contacts FMN. Arginine 164 contacts substrate. Position 251 (lysine 251) interacts with FMN. Histidine 275 serves as the catalytic Proton acceptor. Arginine 278 provides a ligand contact to substrate. Residue 306–330 participates in FMN binding; sequence DSGIRSGLDVVRMIALGADTVLIGR.

This sequence belongs to the FMN-dependent alpha-hydroxy acid dehydrogenase family. In terms of assembly, homotetramer. FMN serves as cofactor.

It is found in the cell inner membrane. The enzyme catalyses (S)-lactate + A = pyruvate + AH2. Its function is as follows. Catalyzes the conversion of L-lactate to pyruvate. Is coupled to the respiratory chain. The protein is L-lactate dehydrogenase of Pseudomonas putida (strain GB-1).